The primary structure comprises 427 residues: Gamma-glutamyl phosphate reductase (427 aa).

The protein belongs to the gamma-glutamyl phosphate reductase family.

It is found in the cytoplasm. It catalyses the reaction L-glutamate 5-semialdehyde + phosphate + NADP(+) = L-glutamyl 5-phosphate + NADPH + H(+). It functions in the pathway amino-acid biosynthesis; L-proline biosynthesis; L-glutamate 5-semialdehyde from L-glutamate: step 2/2. Catalyzes the NADPH-dependent reduction of L-glutamate 5-phosphate into L-glutamate 5-semialdehyde and phosphate. The product spontaneously undergoes cyclization to form 1-pyrroline-5-carboxylate. This Sinorhizobium medicae (strain WSM419) (Ensifer medicae) protein is Gamma-glutamyl phosphate reductase.